A 246-amino-acid polypeptide reads, in one-letter code: 3-deoxy-manno-octulosonate cytidylyltransferase (246 aa).

This sequence belongs to the KdsB family.

Its subcellular location is the cytoplasm. The catalysed reaction is 3-deoxy-alpha-D-manno-oct-2-ulosonate + CTP = CMP-3-deoxy-beta-D-manno-octulosonate + diphosphate. It participates in nucleotide-sugar biosynthesis; CMP-3-deoxy-D-manno-octulosonate biosynthesis; CMP-3-deoxy-D-manno-octulosonate from 3-deoxy-D-manno-octulosonate and CTP: step 1/1. The protein operates within bacterial outer membrane biogenesis; lipopolysaccharide biosynthesis. Its function is as follows. Activates KDO (a required 8-carbon sugar) for incorporation into bacterial lipopolysaccharide in Gram-negative bacteria. In Rickettsia akari (strain Hartford), this protein is 3-deoxy-manno-octulosonate cytidylyltransferase.